Consider the following 120-residue polypeptide: NAD(P)H-quinone oxidoreductase subunit 3, chloroplastic (120 aa).

A run of 3 helical transmembrane segments spans residues 10–30, 64–84, and 89–109; these read FWLFLLIASLIPVSAFSISKI, MFALVFVIFDVETVFLYPWAM, and LGISAFIEALIFVLILIIGLI.

This sequence belongs to the complex I subunit 3 family. In terms of assembly, NDH is composed of at least 16 different subunits, 5 of which are encoded in the nucleus.

Its subcellular location is the plastid. The protein localises to the chloroplast thylakoid membrane. The catalysed reaction is a plastoquinone + NADH + (n+1) H(+)(in) = a plastoquinol + NAD(+) + n H(+)(out). The enzyme catalyses a plastoquinone + NADPH + (n+1) H(+)(in) = a plastoquinol + NADP(+) + n H(+)(out). Its function is as follows. NDH shuttles electrons from NAD(P)H:plastoquinone, via FMN and iron-sulfur (Fe-S) centers, to quinones in the photosynthetic chain and possibly in a chloroplast respiratory chain. The immediate electron acceptor for the enzyme in this species is believed to be plastoquinone. Couples the redox reaction to proton translocation, and thus conserves the redox energy in a proton gradient. This chain is NAD(P)H-quinone oxidoreductase subunit 3, chloroplastic, found in Angiopteris evecta (Mule's foot fern).